Consider the following 335-residue polypeptide: tRNA N6-adenosine threonylcarbamoyltransferase (335 aa).

Fe cation is bound by residues H111 and H115. Substrate-binding positions include 133–137 (LISGG), D166, G179, and N276. D301 contacts Fe cation.

This sequence belongs to the KAE1 / TsaD family. Fe(2+) serves as cofactor.

It localises to the cytoplasm. The catalysed reaction is L-threonylcarbamoyladenylate + adenosine(37) in tRNA = N(6)-L-threonylcarbamoyladenosine(37) in tRNA + AMP + H(+). Required for the formation of a threonylcarbamoyl group on adenosine at position 37 (t(6)A37) in tRNAs that read codons beginning with adenine. Is involved in the transfer of the threonylcarbamoyl moiety of threonylcarbamoyl-AMP (TC-AMP) to the N6 group of A37, together with TsaE and TsaB. TsaD likely plays a direct catalytic role in this reaction. The protein is tRNA N6-adenosine threonylcarbamoyltransferase of Wolbachia sp. subsp. Brugia malayi (strain TRS).